A 207-amino-acid chain; its full sequence is Hemin/hemoglobin-binding protein 1 (207 aa).

A signal peptide spans 1–27; sequence MKKVLVFAAFIVLFSFSFLSTGLTAQA. An NEAT domain is found at 29–148; that stretch reads LKDGTYSVDY…RFDEGSAKAL (120 aa). A disordered region spans residues 151 to 178; it reads AVKSSDNNTTTPATKSDSSNKVTNPKSS. Positions 154-178 are enriched in polar residues; sequence SSDNNTTTPATKSDSSNKVTNPKSS. The NPKXZ sorting signal motif lies at 174–178; the sequence is NPKSS. At serine 177 the chain carries Murein peptidoglycan amidated serine. The propeptide at 178–207 is removed by sortase B; that stretch reads SDSSQMFLYGIIFVATGAGLILLKRRAIFK.

It localises to the secreted. It is found in the cell wall. In terms of biological role, binds both host hemin and hemoglobin with affinity in the nanomolar range and presumably directs it to membrane transporters. The sequence is that of Hemin/hemoglobin-binding protein 1 from Listeria monocytogenes serovar 1/2a (strain ATCC BAA-679 / EGD-e).